Here is a 420-residue protein sequence, read N- to C-terminus: Glyceraldehyde-3-phosphate dehydrogenase GAPCP2, chloroplastic (420 aa).

The transit peptide at 1 to 66 (MALSSLLRSA…YNAKRVQPIK (66 aa)) directs the protein to the chloroplast. NAD(+)-binding positions include 94 to 95 (RI), Asp-116, and Arg-162. D-glyceraldehyde 3-phosphate is bound by residues 233–235 (SCT), Thr-264, 293–294 (TG), and Arg-316. The Nucleophile role is filled by Cys-234. Asn-398 contacts NAD(+).

The protein belongs to the glyceraldehyde-3-phosphate dehydrogenase family. As to quaternary structure, homotetramer. In terms of tissue distribution, expressed in shoot and root vasculature, leaf veins and vascular tissue of flowers and siliques.

It localises to the plastid. The protein localises to the chloroplast stroma. It carries out the reaction D-glyceraldehyde 3-phosphate + phosphate + NAD(+) = (2R)-3-phospho-glyceroyl phosphate + NADH + H(+). Functionally, involved in plastidial glycolytic pathway and plays a specific role in glycolytic energy production in non-green plastids and chloroplasts. Essential for breakdown of starch to form sucrose for export to non-photosynthetic tissues, and to generate primary metabolites for anabolic pathways such as fatty acid and amino acid synthesis. Plays an important role in plant development by providing substrates for the phosphorylated pathway of serine biosynthesis in roots. Plays a crucial role in pollen development. Functionally redundant with GAPCP1. The sequence is that of Glyceraldehyde-3-phosphate dehydrogenase GAPCP2, chloroplastic (GAPCP2) from Arabidopsis thaliana (Mouse-ear cress).